A 503-amino-acid chain; its full sequence is Aromatase (503 aa).

Heme is bound at residue cysteine 437.

It belongs to the cytochrome P450 family. Heme serves as cofactor.

It localises to the membrane. It carries out the reaction testosterone + 3 reduced [NADPH--hemoprotein reductase] + 3 O2 = 17beta-estradiol + formate + 3 oxidized [NADPH--hemoprotein reductase] + 4 H2O + 4 H(+). The catalysed reaction is androst-4-ene-3,17-dione + 3 reduced [NADPH--hemoprotein reductase] + 3 O2 = estrone + formate + 3 oxidized [NADPH--hemoprotein reductase] + 4 H2O + 4 H(+). Its function is as follows. Catalyzes the formation of aromatic C18 estrogens from C19 androgens. The polypeptide is Aromatase (CYP19A1) (Oryctolagus cuniculus (Rabbit)).